The primary structure comprises 570 residues: Proline--tRNA ligase (570 aa).

This sequence belongs to the class-II aminoacyl-tRNA synthetase family. ProS type 1 subfamily. As to quaternary structure, homodimer.

The protein localises to the cytoplasm. It catalyses the reaction tRNA(Pro) + L-proline + ATP = L-prolyl-tRNA(Pro) + AMP + diphosphate. Its function is as follows. Catalyzes the attachment of proline to tRNA(Pro) in a two-step reaction: proline is first activated by ATP to form Pro-AMP and then transferred to the acceptor end of tRNA(Pro). As ProRS can inadvertently accommodate and process non-cognate amino acids such as alanine and cysteine, to avoid such errors it has two additional distinct editing activities against alanine. One activity is designated as 'pretransfer' editing and involves the tRNA(Pro)-independent hydrolysis of activated Ala-AMP. The other activity is designated 'posttransfer' editing and involves deacylation of mischarged Ala-tRNA(Pro). The misacylated Cys-tRNA(Pro) is not edited by ProRS. The sequence is that of Proline--tRNA ligase from Thermoanaerobacter sp. (strain X514).